The primary structure comprises 122 residues: Holo-[acyl-carrier-protein] synthase (122 aa).

2 residues coordinate Mg(2+): Asp-9 and Glu-58.

The protein belongs to the P-Pant transferase superfamily. AcpS family. It depends on Mg(2+) as a cofactor.

The protein resides in the cytoplasm. It catalyses the reaction apo-[ACP] + CoA = holo-[ACP] + adenosine 3',5'-bisphosphate + H(+). Functionally, transfers the 4'-phosphopantetheine moiety from coenzyme A to a Ser of acyl-carrier-protein. The chain is Holo-[acyl-carrier-protein] synthase from Chlamydia caviae (strain ATCC VR-813 / DSM 19441 / 03DC25 / GPIC) (Chlamydophila caviae).